Here is a 143-residue protein sequence, read N- to C-terminus: UPF0763 protein HH_0976 (143 aa).

This sequence belongs to the UPF0763 family.

This Helicobacter hepaticus (strain ATCC 51449 / 3B1) protein is UPF0763 protein HH_0976.